Here is a 184-residue protein sequence, read N- to C-terminus: Peptide deformylase (184 aa).

Fe cation is bound by residues Cys-111 and His-154. Residue Glu-155 is part of the active site. His-158 contributes to the Fe cation binding site.

This sequence belongs to the polypeptide deformylase family. Fe(2+) is required as a cofactor.

It carries out the reaction N-terminal N-formyl-L-methionyl-[peptide] + H2O = N-terminal L-methionyl-[peptide] + formate. Removes the formyl group from the N-terminal Met of newly synthesized proteins. Requires at least a dipeptide for an efficient rate of reaction. N-terminal L-methionine is a prerequisite for activity but the enzyme has broad specificity at other positions. This chain is Peptide deformylase, found in Lactobacillus gasseri (strain ATCC 33323 / DSM 20243 / BCRC 14619 / CIP 102991 / JCM 1131 / KCTC 3163 / NCIMB 11718 / NCTC 13722 / AM63).